Here is a 161-residue protein sequence, read N- to C-terminus: uncharacterized protein (161 aa).

This is an uncharacterized protein from Schizosaccharomyces pombe (strain 972 / ATCC 24843) (Fission yeast).